A 460-amino-acid polypeptide reads, in one-letter code: GTPase Der (460 aa).

2 EngA-type G domains span residues 2 to 166 and 175 to 353; these read KTIA…AEER and TRIA…QERK. Residues 8-15, 55-59, 118-121, 181-188, 228-232, and 293-296 each bind GTP; these read GRPNVGKS, DTGGL, NKLD, GQPNAGKS, DTAGL, and NKID. One can recognise a KH-like domain in the interval 354-446; it reads KRIPTHRLTQ…LLWKWRKAEG (93 aa).

This sequence belongs to the TRAFAC class TrmE-Era-EngA-EngB-Septin-like GTPase superfamily. EngA (Der) GTPase family. In terms of assembly, associates with the 50S ribosomal subunit.

In terms of biological role, GTPase that plays an essential role in the late steps of ribosome biogenesis. The protein is GTPase Der of Methylacidiphilum infernorum (isolate V4) (Methylokorus infernorum (strain V4)).